A 146-amino-acid polypeptide reads, in one-letter code: Hemoglobin subunit beta (146 aa).

Val-1 is modified (N-acetylvaline). Residues 2-146 (HLTDAEKAAI…VASALAHKYH (145 aa)) enclose the Globin domain. Residue His-63 participates in heme b binding. Residue Lys-82 is modified to N6-acetyllysine. His-92 contacts heme b. Cys-93 carries the S-nitrosocysteine modification. Lys-144 carries the post-translational modification N6-acetyllysine.

The protein belongs to the globin family. As to quaternary structure, heterotetramer of two alpha chains and two beta chains. Red blood cells.

In terms of biological role, involved in oxygen transport from the lung to the various peripheral tissues. This Microtus xanthognathus (Yellow-cheeked vole) protein is Hemoglobin subunit beta (HBB).